Here is a 117-residue protein sequence, read N- to C-terminus: MDLIKIAEEAFATGKQHPSFKAGDTVTVAYRIIEGNKERVQLYRGVVIKIAGHGEKKRFTVRKMSGTVGVERIFPIESPAIDSIEVNKVGKVRRAKLYYLRALTGKKARIKEKRVNG.

It belongs to the bacterial ribosomal protein bL19 family.

In terms of biological role, this protein is located at the 30S-50S ribosomal subunit interface and may play a role in the structure and function of the aminoacyl-tRNA binding site. This is Large ribosomal subunit protein bL19 from Bacteroides fragilis (strain ATCC 25285 / DSM 2151 / CCUG 4856 / JCM 11019 / LMG 10263 / NCTC 9343 / Onslow / VPI 2553 / EN-2).